A 514-amino-acid polypeptide reads, in one-letter code: MTHPQTIALVESLDHEGRGVAHVDGKTLFIDGALPYEKVIYSSYRKKPSYENAQTSAVLKESFMRADPRCPHFGVCGGCSMQHVEFTAQVAIKQRVLEDNLKRIGKVKAERVLTPIAGPAWHYRHRARLSARMVAKKGGVLVGFHEKSSSYIAEMRECHILPKHISDLIMPLREMIATLSISQRMPQVEVAVGDKLDILVFRNMDDITDADFAILKAFSDKHGAAERPLQIWLQPKGPDTCYPIYPLDAPKLTYSMPEFAVEMPYYPTEFTQVNPQINAVMVARALKFLDPQPGERIADMFCGIGNFTLPIARSGAVVHGMEGSQPLVRRAVENATHNGLQDKVSYEMANLFDVTEESFAALGKFDKMLVDPPRDGAVQLLKAITEETAPQRIVYVSCNPSTLARDAGVLVHTKGYTLKAAGIINMFPHTAHVESVAWFEKTGPCKTRKEVEEIEALEAAEREAAKAARLAEENAEKARKAAELAEKAAAKEARRAHYFAEKARRDAEEAASDQ.

Positions 70, 76, 79, and 158 each coordinate [4Fe-4S] cluster. 6 residues coordinate S-adenosyl-L-methionine: Gln-272, Phe-301, Asn-306, Glu-322, Asn-350, and Asp-371. Catalysis depends on Cys-398, which acts as the Nucleophile.

It belongs to the class I-like SAM-binding methyltransferase superfamily. RNA M5U methyltransferase family. RlmD subfamily.

It catalyses the reaction uridine(1939) in 23S rRNA + S-adenosyl-L-methionine = 5-methyluridine(1939) in 23S rRNA + S-adenosyl-L-homocysteine + H(+). In terms of biological role, catalyzes the formation of 5-methyl-uridine at position 1939 (m5U1939) in 23S rRNA. This chain is 23S rRNA (uracil(1939)-C(5))-methyltransferase RlmD, found in Chromobacterium violaceum (strain ATCC 12472 / DSM 30191 / JCM 1249 / CCUG 213 / NBRC 12614 / NCIMB 9131 / NCTC 9757 / MK).